The following is a 382-amino-acid chain: Nuclear hormone receptor family member nhr-106 (382 aa).

The nuclear receptor DNA-binding region spans 2–78; sequence QTTCEICEVP…MGMMPEKVKV (77 aa). 2 consecutive NR C4-type zinc fingers follow at residues 5–25 and 42–61; these read CEIC…CRGC and CKYS…CKSC. The region spanning 110–380 is the NR LBD domain; that stretch reads DVSNLITRGL…FSNPEMFIDS (271 aa).

This sequence belongs to the nuclear hormone receptor family.

The protein localises to the nucleus. Its function is as follows. Orphan nuclear receptor. This is Nuclear hormone receptor family member nhr-106 (nhr-106) from Caenorhabditis elegans.